Consider the following 312-residue polypeptide: MKVAVLGAAGGIGQALALLLKNQLPSGSELSLYDIAPVTPGVAVDLSHIPTAVKIKGFSGEDATPALEGADVVLISAGVARKPGMDRSDLFNVNAGIVKNLVQQIAKTCPKACVGIITNPVNTTVAIAAEVLKKAGVYDKNKLFGVTTLDIIRSNTFVAELKGKRPTEVEVPVIGGHSGVTILPLLSQIPGVSFTEQEAAELTKRIQNAGTEVVEAKAGGGSATLSMGQAAARFGLSLVRALQGEKGVVECAYVEGDGQYARFFSQPLLLGKNGVEERKSIGTLSAFEQHSLDAMLDTLKKDIQLGEDFINK.

Residues 7–13 (GAAGGIG) and aspartate 34 each bind NAD(+). 2 residues coordinate substrate: arginine 81 and arginine 87. Residues asparagine 94 and 117–119 (ITN) contribute to the NAD(+) site. Asparagine 119 and arginine 153 together coordinate substrate. Residue histidine 177 is the Proton acceptor of the active site. Residue methionine 227 coordinates NAD(+).

The protein belongs to the LDH/MDH superfamily. MDH type 1 family. As to quaternary structure, homodimer.

The enzyme catalyses (S)-malate + NAD(+) = oxaloacetate + NADH + H(+). Its function is as follows. Catalyzes the reversible oxidation of malate to oxaloacetate. This Salmonella newport (strain SL254) protein is Malate dehydrogenase.